A 271-amino-acid chain; its full sequence is Glutamate racemase (271 aa).

Substrate is bound by residues 10-11 and 42-43; these read DS and YG. The Proton donor/acceptor role is filled by cysteine 73. Position 74–75 (74–75) interacts with substrate; the sequence is NT. Residue cysteine 183 is the Proton donor/acceptor of the active site. Substrate is bound at residue 184–185; sequence TH.

It belongs to the aspartate/glutamate racemases family.

It catalyses the reaction L-glutamate = D-glutamate. Its pathway is cell wall biogenesis; peptidoglycan biosynthesis. Functionally, provides the (R)-glutamate required for cell wall biosynthesis. The chain is Glutamate racemase from Lactococcus lactis subsp. cremoris (strain SK11).